Reading from the N-terminus, the 65-residue chain is Neurotoxin Bot2 (65 aa).

The 63-residue stretch at 2-64 folds into the LCN-type CS-alpha/beta domain; that stretch reads RDAYIAQPEN…VPIRIEGKCH (63 aa). Disulfide bonds link C12/C63, C16/C36, C22/C46, and C26/C48. Position 65 is a phenylalanine amide (F65).

The protein belongs to the long (4 C-C) scorpion toxin superfamily. Sodium channel inhibitor family. Alpha subfamily. Expressed by the venom gland.

It is found in the secreted. Functionally, binds to sodium channels (Nav) and inhibits the inactivation of the activated channels, thereby blocking neuronal transmission. The polypeptide is Neurotoxin Bot2 (Buthus occitanus tunetanus (Common European scorpion)).